The sequence spans 298 residues: MAYRAGFVALIGRTNVGKSTLLNAILKEKVAITSPKPQTTRNTIRGILTTEDYQIIFVDTPGIHKPKSKLSEFMIEVAKRTLKDVDLILYMVEPDTSIGPGDRYILDNLKEVDTPVILVVNKIDLVPAERVEEAIKVFKSEYNFKDVVAISASLGTNVEVLKEKIVSFLPEGPRYYLDDYITDQPEKLIVAEIIREKMLYFLEEEVPHGVYVEVESIKEREDKEIVDIDAYIYCEKESHKGIIIGKNGQMLKKIGQAARQDLEEFYGKQVFLQLWVKVRKGWRDNEKLLRKLGYAIDK.

In terms of domain architecture, Era-type G spans 4-171 (RAGFVALIGR…KEKIVSFLPE (168 aa)). Residues 12–19 (GRTNVGKS) form a G1 region. 12 to 19 (GRTNVGKS) is a binding site for GTP. The interval 38-42 (QTTRN) is G2. The segment at 59–62 (DTPG) is G3. Residues 59 to 63 (DTPGI) and 121 to 124 (NKID) contribute to the GTP site. Positions 121-124 (NKID) are G4. The interval 150–152 (ISA) is G5. A KH type-2 domain is found at 202 to 280 (LEEEVPHGVY…FLQLWVKVRK (79 aa)).

It belongs to the TRAFAC class TrmE-Era-EngA-EngB-Septin-like GTPase superfamily. Era GTPase family. As to quaternary structure, monomer.

It is found in the cytoplasm. It localises to the cell membrane. Functionally, an essential GTPase that binds both GDP and GTP, with rapid nucleotide exchange. Plays a role in 16S rRNA processing and 30S ribosomal subunit biogenesis and possibly also in cell cycle regulation and energy metabolism. The polypeptide is GTPase Era (Caldanaerobacter subterraneus subsp. tengcongensis (strain DSM 15242 / JCM 11007 / NBRC 100824 / MB4) (Thermoanaerobacter tengcongensis)).